Here is a 118-residue protein sequence, read N- to C-terminus: Holin-like protein CidA 2 (118 aa).

Helical transmembrane passes span 4 to 26 (VTLL…IQGV), 33 to 52 (GSLI…VLPL), 62 to 84 (LIVF…GSFL), and 91 to 113 (IFLL…SQLL).

Belongs to the CidA/LrgA family. CidA subfamily.

It localises to the cell membrane. Functionally, increases the activity of extracellular murein hydrolases possibly by mediating their export via hole formation. Inhibited by the antiholin-like proteins LrgAB. In an unstressed cell, the LrgAB products probably inhibit the function of the CidA protein. When a cell is stressed by the addition of antibiotics or by other factors in the environment, CidA possibly oligomerizes within the bacterial cell membrane, creating lesions that disrupt the proton motive force, which in turn results in loss of cell viability. These lesions are also hypothesized to regulate the subsequent cell lysis by either allowing the murein hydrolases access to the cell wall substrate and/or regulating their activity by a possible change in the cell wall pH that results from loss of membrane potential. The chain is Holin-like protein CidA 2 (cidA2) from Bacillus cereus (strain ATCC 14579 / DSM 31 / CCUG 7414 / JCM 2152 / NBRC 15305 / NCIMB 9373 / NCTC 2599 / NRRL B-3711).